Here is a 216-residue protein sequence, read N- to C-terminus: ATP-dependent Clp protease proteolytic subunit (216 aa).

Ser-101 functions as the Nucleophile in the catalytic mechanism. Residue His-126 is part of the active site.

Belongs to the peptidase S14 family. As to quaternary structure, component of the chloroplastic Clp protease core complex.

The protein resides in the plastid. Its subcellular location is the chloroplast stroma. It catalyses the reaction Hydrolysis of proteins to small peptides in the presence of ATP and magnesium. alpha-casein is the usual test substrate. In the absence of ATP, only oligopeptides shorter than five residues are hydrolyzed (such as succinyl-Leu-Tyr-|-NHMec, and Leu-Tyr-Leu-|-Tyr-Trp, in which cleavage of the -Tyr-|-Leu- and -Tyr-|-Trp bonds also occurs).. Cleaves peptides in various proteins in a process that requires ATP hydrolysis. Has a chymotrypsin-like activity. Plays a major role in the degradation of misfolded proteins. This Hordeum vulgare (Barley) protein is ATP-dependent Clp protease proteolytic subunit.